Here is a 138-residue protein sequence, read N- to C-terminus: Rapid alkalinization factor 23 (138 aa).

The first 28 residues, 1–28 (MRGLSRNSGAAAIFAILLILAVHNWSVA), serve as a signal peptide directing secretion. Positions 29–88 (VSSQSTEFAGDFPPFETECRGTIAECSVSAALGDGGDLFYGGGEMGEEFEMDSEINRRIL) are cleaved as a propeptide — removed in mature form. 2 cysteine pairs are disulfide-bonded: Cys-106–Cys-116 and Cys-129–Cys-135.

Belongs to the plant rapid alkalinization factor (RALF) family. Post-translationally, proteolytically cleaved, probably by SBT6.1 (S1P), a subtilisin-like serine protease (subtilase).

It is found in the secreted. Functionally, cell signaling peptide that may regulate plant stress, growth, and development. Mediates a rapid alkalinization of extracellular space by mediating a transient increase in the cytoplasmic Ca(2+) concentration leading to a calcium-dependent signaling events through a cell surface receptor and a concomitant activation of some intracellular mitogen-activated protein kinases. Negatively regulates brassinolide (BL)-mediated signaling pathway (e.g. BL-induced hypocotyl elongation and branching limitation). This is Rapid alkalinization factor 23 (RALF23) from Arabidopsis thaliana (Mouse-ear cress).